The chain runs to 118 residues: Large ribosomal subunit protein uL24 (118 aa).

The protein belongs to the universal ribosomal protein uL24 family. As to quaternary structure, part of the 50S ribosomal subunit.

In terms of biological role, one of two assembly initiator proteins, it binds directly to the 5'-end of the 23S rRNA, where it nucleates assembly of the 50S subunit. One of the proteins that surrounds the polypeptide exit tunnel on the outside of the subunit. This Parasynechococcus marenigrum (strain WH8102) protein is Large ribosomal subunit protein uL24.